Consider the following 152-residue polypeptide: Ribonuclease pancreatic (152 aa).

Residues 1-24 (MALDKSVILLPLLVLVLLVLGCLG) form the signal peptide. Positions 31 and 34 each coordinate substrate. The Proton acceptor role is filled by His36. Asn46 carries an N-linked (GlcNAc...) asparagine glycan. Disulfide bonds link Cys50–Cys108, Cys64–Cys119, Cys82–Cys134, and Cys89–Cys96. Substrate-binding positions include 65–69 (KPVNT), Lys90, and Arg109. Asn112 carries an N-linked (GlcNAc...) asparagine glycan. The active-site Proton donor is His143.

Belongs to the pancreatic ribonuclease family. In terms of assembly, monomer. Interacts with and forms tight 1:1 complexes with RNH1. Dimerization of two such complexes may occur. Interaction with RNH1 inhibits this protein.

Its subcellular location is the secreted. The enzyme catalyses an [RNA] containing cytidine + H2O = an [RNA]-3'-cytidine-3'-phosphate + a 5'-hydroxy-ribonucleotide-3'-[RNA].. The catalysed reaction is an [RNA] containing uridine + H2O = an [RNA]-3'-uridine-3'-phosphate + a 5'-hydroxy-ribonucleotide-3'-[RNA].. Functionally, endonuclease that catalyzes the cleavage of RNA on the 3' side of pyrimidine nucleotides. Acts on single-stranded and double-stranded RNA. In Papio hamadryas (Hamadryas baboon), this protein is Ribonuclease pancreatic (RNASE1).